The primary structure comprises 145 residues: MSTEGGGRRCQAQVSRRISFSASHRLYSKFLSDEENLKLFGKCNNPNGHGHNYKVVVTVHGEIDPATGMVMNLADLKKYMEEAIMQPLDHKNLDMDVPYFADVVSTTENVAVYIWDNLQKVLPVGVLYKVKVYETDNNIVVYKGE.

Position 19 is a phosphoserine; by PKG (serine 19). Histidine 24 is a binding site for Zn(2+). Serine 28 carries the phosphoserine modification. The active-site Proton acceptor is the cysteine 43. Histidine 49 and histidine 51 together coordinate Zn(2+). Residue histidine 90 is the Charge relay system of the active site. Residue tyrosine 128 is modified to Phosphotyrosine. Glutamate 134 serves as the catalytic Charge relay system.

This sequence belongs to the PTPS family. As to quaternary structure, homohexamer formed of two homotrimers in a head to head fashion. The cofactor is Zn(2+). Phosphorylation of Ser-19 is required for maximal enzyme activity.

It carries out the reaction 7,8-dihydroneopterin 3'-triphosphate = 6-pyruvoyl-5,6,7,8-tetrahydropterin + triphosphate + H(+). The protein operates within cofactor biosynthesis; tetrahydrobiopterin biosynthesis; tetrahydrobiopterin from 7,8-dihydroneopterin triphosphate: step 1/3. Functionally, involved in the biosynthesis of tetrahydrobiopterin, an essential cofactor of aromatic amino acid hydroxylases. Catalyzes the transformation of 7,8-dihydroneopterin triphosphate into 6-pyruvoyl tetrahydropterin. This chain is 6-pyruvoyl tetrahydrobiopterin synthase (PTS), found in Homo sapiens (Human).